Consider the following 448-residue polypeptide: Trigger factor (448 aa).

A PPIase FKBP-type domain is found at 173–258 (SDRVTIDFVG…LKQIEWAHMP (86 aa)).

It belongs to the FKBP-type PPIase family. Tig subfamily.

Its subcellular location is the cytoplasm. The enzyme catalyses [protein]-peptidylproline (omega=180) = [protein]-peptidylproline (omega=0). In terms of biological role, involved in protein export. Acts as a chaperone by maintaining the newly synthesized protein in an open conformation. Functions as a peptidyl-prolyl cis-trans isomerase. This Herminiimonas arsenicoxydans protein is Trigger factor.